A 96-amino-acid chain; its full sequence is Small ribosomal subunit protein bS18 (96 aa).

This sequence belongs to the bacterial ribosomal protein bS18 family. Part of the 30S ribosomal subunit. Forms a tight heterodimer with protein bS6.

Functionally, binds as a heterodimer with protein bS6 to the central domain of the 16S rRNA, where it helps stabilize the platform of the 30S subunit. The sequence is that of Small ribosomal subunit protein bS18 from Borreliella burgdorferi (strain ATCC 35210 / DSM 4680 / CIP 102532 / B31) (Borrelia burgdorferi).